Consider the following 690-residue polypeptide: UvrABC system protein C (690 aa).

In terms of domain architecture, GIY-YIG spans 15–94 (TDPGVYTFRD…IKRFNPRFNV (80 aa)). The region spanning 207-242 (EPVLRRVRKEMEQASENLDFERAASLRDQLQAMQKS) is the UVR domain.

The protein belongs to the UvrC family. Interacts with UvrB in an incision complex.

The protein resides in the cytoplasm. In terms of biological role, the UvrABC repair system catalyzes the recognition and processing of DNA lesions. UvrC both incises the 5' and 3' sides of the lesion. The N-terminal half is responsible for the 3' incision and the C-terminal half is responsible for the 5' incision. The polypeptide is UvrABC system protein C (Corynebacterium jeikeium (strain K411)).